Reading from the N-terminus, the 269-residue chain is Bis(5'-nucleosyl)-tetraphosphatase, symmetrical (269 aa).

It belongs to the Ap4A hydrolase family.

The enzyme catalyses P(1),P(4)-bis(5'-adenosyl) tetraphosphate + H2O = 2 ADP + 2 H(+). Hydrolyzes diadenosine 5',5'''-P1,P4-tetraphosphate to yield ADP. This Vibrio vulnificus (strain CMCP6) protein is Bis(5'-nucleosyl)-tetraphosphatase, symmetrical.